Here is a 367-residue protein sequence, read N- to C-terminus: Oleoyl-acyl carrier protein thioesterase 2, chloroplastic (367 aa).

A chloroplast-targeting transit peptide spans 1–48 (MLKLSCNVTDHIHNLFSNSRRIFVPVHRQTRPISCFQLKKEPLRAILS). Residues Asn263, His265, and Cys300 contribute to the active site.

This sequence belongs to the acyl-ACP thioesterase family.

The protein resides in the plastid. It is found in the chloroplast. The enzyme catalyses (9Z)-octadecenoyl-[ACP] + H2O = (9Z)-octadecenoate + holo-[ACP] + H(+). Functionally, plays an essential role in chain termination during de novo fatty acid synthesis. Possesses high thioesterase activity for oleoyl-ACP versus other acyl-ACPs. In Arabidopsis thaliana (Mouse-ear cress), this protein is Oleoyl-acyl carrier protein thioesterase 2, chloroplastic (FATA2).